The primary structure comprises 290 residues: Ribosomal RNA small subunit methyltransferase A (290 aa).

S-adenosyl-L-methionine is bound by residues H37, V39, G64, E85, D115, and N132.

This sequence belongs to the class I-like SAM-binding methyltransferase superfamily. rRNA adenine N(6)-methyltransferase family. RsmA subfamily.

It is found in the cytoplasm. It carries out the reaction adenosine(1518)/adenosine(1519) in 16S rRNA + 4 S-adenosyl-L-methionine = N(6)-dimethyladenosine(1518)/N(6)-dimethyladenosine(1519) in 16S rRNA + 4 S-adenosyl-L-homocysteine + 4 H(+). Its function is as follows. Specifically dimethylates two adjacent adenosines (A1518 and A1519) in the loop of a conserved hairpin near the 3'-end of 16S rRNA in the 30S particle. May play a critical role in biogenesis of 30S subunits. This is Ribosomal RNA small subunit methyltransferase A from Acidothermus cellulolyticus (strain ATCC 43068 / DSM 8971 / 11B).